The following is a 522-amino-acid chain: Peptide chain release factor 3 (522 aa).

The tr-type G domain occupies 10–277 (ASRKTFAIIS…TFVDFAPAPS (268 aa)). GTP-binding positions include 19-26 (SHPDAGKT), 87-91 (DTPGH), and 141-144 (NKMD).

It belongs to the TRAFAC class translation factor GTPase superfamily. Classic translation factor GTPase family. PrfC subfamily.

The protein resides in the cytoplasm. Its function is as follows. Increases the formation of ribosomal termination complexes and stimulates activities of RF-1 and RF-2. It binds guanine nucleotides and has strong preference for UGA stop codons. It may interact directly with the ribosome. The stimulation of RF-1 and RF-2 is significantly reduced by GTP and GDP, but not by GMP. The protein is Peptide chain release factor 3 of Listeria monocytogenes serovar 1/2a (strain ATCC BAA-679 / EGD-e).